Consider the following 210-residue polypeptide: Probable GTP-binding protein EngB (210 aa).

The region spanning 30-204 (QGYEVAFAGR…YRVLADWMEL (175 aa)) is the EngB-type G domain. GTP contacts are provided by residues 38-45 (GRSNAGKS), 64-68 (GRTQL), 82-85 (DLPG), 149-152 (TKAD), and 182-185 (LFSA). Mg(2+)-binding residues include S45 and T66.

The protein belongs to the TRAFAC class TrmE-Era-EngA-EngB-Septin-like GTPase superfamily. EngB GTPase family. Mg(2+) serves as cofactor.

In terms of biological role, necessary for normal cell division and for the maintenance of normal septation. In Pseudomonas putida (strain ATCC 700007 / DSM 6899 / JCM 31910 / BCRC 17059 / LMG 24140 / F1), this protein is Probable GTP-binding protein EngB.